The chain runs to 61 residues: Metallothionein-1C (61 aa).

Residues 1 to 29 form a beta region; that stretch reads MDPNCSCSTGSSCSCAGSCTCKACRCPSC. Residues Cys-5, Cys-7, Cys-13, Cys-15, Cys-19, Cys-21, Cys-24, Cys-26, Cys-29, Cys-33, Cys-34, Cys-36, Cys-37, Cys-41, Cys-44, Cys-48, Cys-50, Cys-57, Cys-59, and Cys-60 each contribute to the a divalent metal cation site. Positions 30 to 61 are alpha; the sequence is KKSCCSCCPVGCAKCAQGCICKGASDKCSCCA.

The protein belongs to the metallothionein superfamily. Type 1 family.

Metallothioneins have a high content of cysteine residues that bind various heavy metals; these proteins are transcriptionally regulated by both heavy metals and glucocorticoids. The protein is Metallothionein-1C (MT1C) of Ovis aries (Sheep).